Consider the following 103-residue polypeptide: Large ribosomal subunit protein bL21 (103 aa).

It belongs to the bacterial ribosomal protein bL21 family. Part of the 50S ribosomal subunit. Contacts protein L20.

Its function is as follows. This protein binds to 23S rRNA in the presence of protein L20. The polypeptide is Large ribosomal subunit protein bL21 (Psychrobacter arcticus (strain DSM 17307 / VKM B-2377 / 273-4)).